The chain runs to 64 residues: Large ribosomal subunit protein uL29 (64 aa).

The protein belongs to the universal ribosomal protein uL29 family.

The chain is Large ribosomal subunit protein uL29 from Cupriavidus metallidurans (strain ATCC 43123 / DSM 2839 / NBRC 102507 / CH34) (Ralstonia metallidurans).